The chain runs to 182 residues: Putative colanic acid biosynthesis acetyltransferase WcaF (182 aa).

The protein belongs to the transferase hexapeptide repeat family.

It participates in slime biogenesis; slime polysaccharide biosynthesis. The polypeptide is Putative colanic acid biosynthesis acetyltransferase WcaF (wcaF) (Shigella flexneri).